We begin with the raw amino-acid sequence, 750 residues long: Photosystem I P700 chlorophyll a apoprotein A1 (750 aa).

A run of 8 helical transmembrane segments spans residues 70–93 (VFSAHFGQLSIIFLWLSGMYFHGA), 156–179 (LYCTAIGALVFAALMLFAGWFHYH), 195–219 (LNHHLAGLLGLGSLSWAGHQVHVSL), 291–309 (IAHHHLAIAILFLIAGHMY), 346–369 (WHAQLSLNLAMLGSLTIVVAHHMY), 385–411 (LSLFTHHMWIGGFLIVGAAAHAAIFMV), 433–455 (AIISHLNWVCIFLGFHSFGLYIH), and 531–549 (FLVHHIHAFTIHVTVLILL). Cys573 and Cys582 together coordinate [4Fe-4S] cluster. The next 2 helical transmembrane spans lie at 589–610 (HVFLGLFWMYNAISVVIFHFSW) and 664–686 (LSAYGLFFLGAHFVWAFSLMFLF). His675 serves as a coordination point for chlorophyll a'. Residues Met683 and Tyr691 each coordinate chlorophyll a. Trp692 contributes to the phylloquinone binding site. A helical membrane pass occupies residues 724 to 744 (AVGVTHYLLGGIATTWAFFLA).

It belongs to the PsaA/PsaB family. The PsaA/B heterodimer binds the P700 chlorophyll special pair and subsequent electron acceptors. PSI consists of a core antenna complex that captures photons, and an electron transfer chain that converts photonic excitation into a charge separation. The eukaryotic PSI reaction center is composed of at least 11 subunits. Requires P700 is a chlorophyll a/chlorophyll a' dimer, A0 is one or more chlorophyll a, A1 is one or both phylloquinones and FX is a shared 4Fe-4S iron-sulfur center. as cofactor.

Its subcellular location is the plastid. It localises to the chloroplast thylakoid membrane. The catalysed reaction is reduced [plastocyanin] + hnu + oxidized [2Fe-2S]-[ferredoxin] = oxidized [plastocyanin] + reduced [2Fe-2S]-[ferredoxin]. PsaA and PsaB bind P700, the primary electron donor of photosystem I (PSI), as well as the electron acceptors A0, A1 and FX. PSI is a plastocyanin-ferredoxin oxidoreductase, converting photonic excitation into a charge separation, which transfers an electron from the donor P700 chlorophyll pair to the spectroscopically characterized acceptors A0, A1, FX, FA and FB in turn. Oxidized P700 is reduced on the lumenal side of the thylakoid membrane by plastocyanin. In Eucalyptus globulus subsp. globulus (Tasmanian blue gum), this protein is Photosystem I P700 chlorophyll a apoprotein A1.